The primary structure comprises 178 residues: Adenine phosphoribosyltransferase (178 aa).

This sequence belongs to the purine/pyrimidine phosphoribosyltransferase family. Homodimer.

It is found in the cytoplasm. The catalysed reaction is AMP + diphosphate = 5-phospho-alpha-D-ribose 1-diphosphate + adenine. It participates in purine metabolism; AMP biosynthesis via salvage pathway; AMP from adenine: step 1/1. Catalyzes a salvage reaction resulting in the formation of AMP, that is energically less costly than de novo synthesis. The chain is Adenine phosphoribosyltransferase from Pseudoalteromonas atlantica (strain T6c / ATCC BAA-1087).